A 320-amino-acid chain; its full sequence is Malate dehydrogenase (320 aa).

NAD(+)-binding positions include 10 to 15 (GAGQIG) and Asp34. Arg83 and Arg89 together coordinate substrate. Residues Asn96 and 119-121 (ITN) contribute to the NAD(+) site. Substrate-binding residues include Asn121 and Arg152. The active-site Proton acceptor is the His176.

Belongs to the LDH/MDH superfamily. MDH type 3 family.

It catalyses the reaction (S)-malate + NAD(+) = oxaloacetate + NADH + H(+). Functionally, catalyzes the reversible oxidation of malate to oxaloacetate. This chain is Malate dehydrogenase, found in Ruegeria pomeroyi (strain ATCC 700808 / DSM 15171 / DSS-3) (Silicibacter pomeroyi).